The chain runs to 906 residues: Protein translocase subunit SecA (906 aa).

ATP-binding positions include Gln86, 104-108 (GEGKT), and Asp499. The tract at residues 863 to 885 (PVVSRIDPKDRNPDDPTSWGRVS) is disordered. Cys890, Cys892, Cys901, and His902 together coordinate Zn(2+).

The protein belongs to the SecA family. As to quaternary structure, monomer and homodimer. Part of the essential Sec protein translocation apparatus which comprises SecA, SecYEG and auxiliary proteins SecDF-YajC and YidC. It depends on Zn(2+) as a cofactor.

The protein localises to the cell inner membrane. The protein resides in the cytoplasm. It carries out the reaction ATP + H2O + cellular proteinSide 1 = ADP + phosphate + cellular proteinSide 2.. Its function is as follows. Part of the Sec protein translocase complex. Interacts with the SecYEG preprotein conducting channel. Has a central role in coupling the hydrolysis of ATP to the transfer of proteins into and across the cell membrane, serving both as a receptor for the preprotein-SecB complex and as an ATP-driven molecular motor driving the stepwise translocation of polypeptide chains across the membrane. In Rickettsia akari (strain Hartford), this protein is Protein translocase subunit SecA.